Consider the following 798-residue polypeptide: Interphotoreceptor matrix proteoglycan 1 (798 aa).

The signal sequence occupies residues M1–G20. N142 carries N-linked (GlcNAc...) asparagine glycosylation. In terms of domain architecture, SEA 1 spans S238 to L360. T442 and T445 each carry an O-linked (GalNAc...) threonine glycan. An SEA 2 domain is found at H574 to Q687. N-linked (GlcNAc...) asparagine glycosylation is found at N595 and N619. The short motif at K624 to R632 is the Heparin- and hyaluronan-binding element. N633 and N651 each carry an N-linked (GlcNAc...) asparagine glycan. Residues A741–N798 form a disordered region. Over residues D786 to N798 the composition is skewed to acidic residues.

Highly glycosylated (N- and O-linked carbohydrates and sialic acid).

It localises to the cell projection. It is found in the cilium. Its subcellular location is the photoreceptor outer segment. The protein localises to the secreted. The protein resides in the extracellular space. It localises to the extracellular matrix. It is found in the interphotoreceptor matrix. Its subcellular location is the photoreceptor inner segment. Its function is as follows. Chondroitin sulfate-, heparin- and hyaluronan-binding protein. May serve to form a basic macromolecular scaffold comprising the insoluble interphotoreceptor matrix. This Rattus norvegicus (Rat) protein is Interphotoreceptor matrix proteoglycan 1.